The primary structure comprises 962 residues: Thrombospondin-3a (962 aa).

The first 23 residues, 1–23 (MEQMFVHIWVSLVVLMSVWSAQS), serve as a signal peptide directing secretion. In terms of domain architecture, Laminin G-like spans 24–196 (DKKQDVPVID…MDTLKLALGG (173 aa)). In terms of domain architecture, EGF-like 1 spans 277–318 (PRSRCQPNPCFKGVSCMETFEYPGYRCGPCPDGMTGNGTHCQ). Intrachain disulfides connect cysteine 281–cysteine 292, cysteine 286–cysteine 303, cysteine 306–cysteine 317, cysteine 323–cysteine 335, cysteine 329–cysteine 344, cysteine 347–cysteine 371, cysteine 377–cysteine 390, cysteine 384–cysteine 399, cysteine 402–cysteine 414, cysteine 420–cysteine 434, cysteine 428–cysteine 444, cysteine 446–cysteine 457, cysteine 473–cysteine 480, cysteine 485–cysteine 505, cysteine 521–cysteine 541, cysteine 544–cysteine 564, cysteine 580–cysteine 600, cysteine 603–cysteine 623, cysteine 641–cysteine 661, and cysteine 684–cysteine 704. Asparagine 313 carries N-linked (GlcNAc...) asparagine glycosylation. In terms of domain architecture, EGF-like 2; calcium-binding spans 319–358 (DIDECSEAQPCYTPGACVNTARGFTCESCPPGMWGPPLSG). An EGF-like 3; calcium-binding domain is found at 373 to 412 (DIDECVDLANACTPNSVCINIIGSFRCGQCKTGYVGNQTA). Asparagine 409 carries N-linked (GlcNAc...) asparagine glycosylation. In terms of domain architecture, EGF-like 4 spans 416–458 (PRKSCSSLSFNPCDANAHCVMQRNGDVSCACNVGWAGNGHTCG). 8 TSP type-3 repeats span residues 459–493 (KDTDIDGYPDRSLPCMDNHKHCRQDNCVYTPNSGQ), 494–529 (EDADNDGIGDQCDEDADGDGIKNVEDNCRLVSNKDQ), 530–552 (QNSDTDSFGDACDNCPTVPNIDQ), 553–588 (KDTDSNGEGDACDDDIDGDGIQNVLDNCPKVPNPMQ), 589–611 (TDRDRDGVGDACDSCPEISNPMQ), 612–649 (TDVDNDLVGDVCDTNQDTDGDGHQDTRDNCPDIPNSSQ), 650–692 (LDSD…NPNQ), and 693–728 (KDSDSNGVGDVCENDFDNDSVMDLVDVCPESAEVTL). The disordered stretch occupies residues 548 to 704 (PNIDQKDTDS…SDSNGVGDVC (157 aa)). Over residues 557–570 (SNGEGDACDDDIDG) the composition is skewed to acidic residues. Residues 631-641 (GDGHQDTRDNC) are compositionally biased toward basic and acidic residues. Asparagine 646 carries N-linked (GlcNAc...) asparagine glycosylation. A compositionally biased stretch (acidic residues) spans 652–669 (SDNDGIGDDCDEDDDNDG). An N-linked (GlcNAc...) asparagine glycan is attached at asparagine 710. A disulfide bond links cysteine 720 and cysteine 941. A TSP C-terminal domain is found at 732-946 (RAYQTVILDP…LRYRCNDTVP (215 aa)). N-linked (GlcNAc...) asparagine glycosylation is present at asparagine 942.

Belongs to the thrombospondin family. Oligomer; disulfide-linked.

In terms of biological role, adhesive glycoprotein that mediates cell-to-cell and cell-to-matrix interactions. Can bind to fibrinogen, fibronectin, laminin and type V collagen. The polypeptide is Thrombospondin-3a (thbs3a) (Danio rerio (Zebrafish)).